The sequence spans 285 residues: UPF0603 protein At1g54780, chloroplastic (285 aa).

Disordered stretches follow at residues 1 to 48 (METL…LSTR) and 228 to 251 (GQPD…TKEE). A compositionally biased stretch (polar residues) spans 22–40 (HQTKPTSHSLSLSKPTTFS). Over residues 238–251 (KDSKRESNFKTKEE) the composition is skewed to basic and acidic residues. Residues 259–279 (FSLVVGGLLVIAFVVPMAQYF) form a helical membrane-spanning segment.

Belongs to the UPF0603 family.

It is found in the plastid. It localises to the chloroplast thylakoid membrane. The protein is UPF0603 protein At1g54780, chloroplastic of Arabidopsis thaliana (Mouse-ear cress).